A 671-amino-acid polypeptide reads, in one-letter code: Fusexin 1 (671 aa).

The Cytoplasmic segment spans residues 1–12 (MRAVSDFLKNKW). The chain crosses the membrane as a helical span at residues 13-33 (VAVPAVALLILSLGFLAQNYI). Over 34–574 (TGSFVSGDQI…DPFCADGPLE (541 aa)) the chain is Extracellular. Disulfide bonds link C145-C180, C409-C452, C480-C500, and C513-C528. Residues 168 to 173 (GAIADY) are fusion loop. A helical membrane pass occupies residues 575 to 595 (MLSKMFHLVAGTAVAFFTGSL). Residues 596 to 628 (GYRAGRWVDGEYQIKGGFDPLKSRSVSRAKRGR) lie on the Cytoplasmic side of the membrane. The chain crosses the membrane as a helical span at residues 629-649 (FLIGLIAELVSFLLGFYVILL). Position 650 (V650) is a topological domain, extracellular. A helical transmembrane segment spans residues 651-671 (PIWAQLMVILGYVLFKYYTPF).

It belongs to the HAP2/GCS1 family. Fusexin 1 subfamily. In terms of assembly, homotrimer stabilized by interdomain contacts and numerous Ca(2+) and Na(+) ions.

It is found in the cell surface. The protein resides in the cell membrane. In terms of biological role, exhibits fusogenic activity. Mediates cell-cell fusion in mammalian cells (bilateral fusion). The polypeptide is Fusexin 1 (Natrinema altunense (strain JCM 12890 / CGMCC 1.3731 / AJ2)).